A 276-amino-acid polypeptide reads, in one-letter code: Small ribosomal subunit protein uS3 (276 aa).

Residues 39-110 (IRRETMKFLK…KINIKIKEIK (72 aa)) form the KH type-2 domain.

The protein belongs to the universal ribosomal protein uS3 family. In terms of assembly, part of the 30S ribosomal subunit. Forms a tight complex with proteins S10 and S14.

Its function is as follows. Binds the lower part of the 30S subunit head. Binds mRNA in the 70S ribosome, positioning it for translation. The chain is Small ribosomal subunit protein uS3 from Borrelia turicatae (strain 91E135).